A 347-amino-acid polypeptide reads, in one-letter code: tRNA N6-adenosine threonylcarbamoyltransferase (347 aa).

His-110 and His-114 together coordinate Fe cation. Substrate is bound by residues 133–137, Asp-168, Gly-181, Asp-185, and Asn-277; that span reads VVSGG. Position 305 (Asp-305) interacts with Fe cation.

This sequence belongs to the KAE1 / TsaD family. Fe(2+) is required as a cofactor.

The protein localises to the cytoplasm. It catalyses the reaction L-threonylcarbamoyladenylate + adenosine(37) in tRNA = N(6)-L-threonylcarbamoyladenosine(37) in tRNA + AMP + H(+). Required for the formation of a threonylcarbamoyl group on adenosine at position 37 (t(6)A37) in tRNAs that read codons beginning with adenine. Is involved in the transfer of the threonylcarbamoyl moiety of threonylcarbamoyl-AMP (TC-AMP) to the N6 group of A37, together with TsaE and TsaB. TsaD likely plays a direct catalytic role in this reaction. This is tRNA N6-adenosine threonylcarbamoyltransferase from Kineococcus radiotolerans (strain ATCC BAA-149 / DSM 14245 / SRS30216).